A 1212-amino-acid polypeptide reads, in one-letter code: DNA-directed RNA polymerase subunit beta'' (1212 aa).

4 residues coordinate Zn(2+): cysteine 229, cysteine 302, cysteine 309, and cysteine 312. The disordered stretch occupies residues 1162–1212 (QKETSKNKKETSKNKKETSKNKKETSKNKKETSKNKKETSKNKKEASKNKK).

This sequence belongs to the RNA polymerase beta' chain family. RpoC2 subfamily. In plastids the minimal PEP RNA polymerase catalytic core is composed of four subunits: alpha, beta, beta', and beta''. When a (nuclear-encoded) sigma factor is associated with the core the holoenzyme is formed, which can initiate transcription. Requires Zn(2+) as cofactor.

The protein localises to the plastid. It localises to the chloroplast. The enzyme catalyses RNA(n) + a ribonucleoside 5'-triphosphate = RNA(n+1) + diphosphate. DNA-dependent RNA polymerase catalyzes the transcription of DNA into RNA using the four ribonucleoside triphosphates as substrates. The sequence is that of DNA-directed RNA polymerase subunit beta'' from Cryptomeria japonica (Japanese cedar).